We begin with the raw amino-acid sequence, 363 residues long: Peroxisomal (S)-2-hydroxyacid oxidase GLO3 (363 aa).

Residues 1-357 enclose the FMN hydroxy acid dehydrogenase domain; it reads MDQIVNVDEF…TRNHVRTENE (357 aa). Residues 78–80, serine 107, 128–130, and threonine 156 contribute to the FMN site; these read PTG and QIY. A 2-oxocarboxylate is bound at residue tyrosine 130. Residue arginine 165 participates in a 2-oxocarboxylate binding. FMN is bound by residues lysine 228 and serine 250. Catalysis depends on histidine 252, which acts as the Proton acceptor. Arginine 255 contributes to the a 2-oxocarboxylate binding site. Residues 283-287 and 306-307 each bind FMN; these read DGGVR and GR. Positions 361–363 match the Microbody targeting signal motif; the sequence is SML.

This sequence belongs to the FMN-dependent alpha-hydroxy acid dehydrogenase family. In terms of assembly, homotetramer. FMN is required as a cofactor.

It is found in the peroxisome. It catalyses the reaction a (2S)-2-hydroxycarboxylate + O2 = a 2-oxocarboxylate + H2O2. The enzyme catalyses 2-hydroxy-4-methylpentanoate + O2 = 4-methyl-2-oxopentanoate + H2O2. The catalysed reaction is 2-hydroxyhexanoate + O2 = 2-oxohexanoate + H2O2. It carries out the reaction 2-hydroxyoctanoate + O2 = 2-oxooctanoate + H2O2. In terms of biological role, oxidase that catalyzes the oxidation of a broad range of 2-hydroxyacids to the corresponding 2-oxoacids, with a reduction of O2 to H2O2. Displays the highest activity with leucic acid (2-hydroxy-4-methylpentanoate) and has intermediate activity with 2-hydroxyhexanoate and 2-hydroxyoctanote. Shows lower activity with 2-hydroxydodecanoate, valic acid, and isoleucic acid and extremely low activity with glycolate and L-lactate. Cannot use 2-hydroxyhexadecanoate or D-lactate as substrates. May be involved in the conversion or degradation of 2-hydroxyacids produced during the metabolism of fatty acids or amino acids. In Arabidopsis thaliana (Mouse-ear cress), this protein is Peroxisomal (S)-2-hydroxyacid oxidase GLO3 (GLO3).